The sequence spans 702 residues: Ribosomal RNA large subunit methyltransferase K/L (702 aa).

The region spanning 43-154 is the THUMP domain; sequence LIYQSLMWSR…KETASIALDL (112 aa).

It belongs to the methyltransferase superfamily. RlmKL family.

It localises to the cytoplasm. The catalysed reaction is guanosine(2445) in 23S rRNA + S-adenosyl-L-methionine = N(2)-methylguanosine(2445) in 23S rRNA + S-adenosyl-L-homocysteine + H(+). It carries out the reaction guanosine(2069) in 23S rRNA + S-adenosyl-L-methionine = N(2)-methylguanosine(2069) in 23S rRNA + S-adenosyl-L-homocysteine + H(+). Its function is as follows. Specifically methylates the guanine in position 2445 (m2G2445) and the guanine in position 2069 (m7G2069) of 23S rRNA. This chain is Ribosomal RNA large subunit methyltransferase K/L, found in Salmonella typhi.